Here is a 368-residue protein sequence, read N- to C-terminus: Ribosomal RNA large subunit methyltransferase M (368 aa).

S-adenosyl-L-methionine contacts are provided by residues S189, 222–225 (CPGG), D241, D261, and D278. Residue K307 is the Proton acceptor of the active site.

Belongs to the class I-like SAM-binding methyltransferase superfamily. RNA methyltransferase RlmE family. RlmM subfamily. Monomer.

The protein localises to the cytoplasm. The enzyme catalyses cytidine(2498) in 23S rRNA + S-adenosyl-L-methionine = 2'-O-methylcytidine(2498) in 23S rRNA + S-adenosyl-L-homocysteine + H(+). In terms of biological role, catalyzes the 2'-O-methylation at nucleotide C2498 in 23S rRNA. This is Ribosomal RNA large subunit methyltransferase M from Yersinia pseudotuberculosis serotype O:1b (strain IP 31758).